The chain runs to 160 residues: Serine-protein kinase RsbW (160 aa).

It belongs to the anti-sigma-factor family.

It catalyses the reaction L-seryl-[protein] + ATP = O-phospho-L-seryl-[protein] + ADP + H(+). It carries out the reaction L-threonyl-[protein] + ATP = O-phospho-L-threonyl-[protein] + ADP + H(+). In terms of biological role, negative regulator of sigma-B activity. Phosphorylates and inactivates its specific antagonist protein, RsbV. Upon phosphorylation of RsbV, RsbW is released and binds to sigma-B, thereby blocking its ability to form an RNA polymerase holoenzyme (E-sigma-B). The protein is Serine-protein kinase RsbW of Bacillus thuringiensis (strain Al Hakam).